The sequence spans 49 residues: Large ribosomal subunit protein bL33A (49 aa).

The protein belongs to the bacterial ribosomal protein bL33 family.

The sequence is that of Large ribosomal subunit protein bL33A from Levilactobacillus brevis (strain ATCC 367 / BCRC 12310 / CIP 105137 / JCM 1170 / LMG 11437 / NCIMB 947 / NCTC 947) (Lactobacillus brevis).